The primary structure comprises 68 residues: Protein SlyX homolog (68 aa).

It belongs to the SlyX family.

The chain is Protein SlyX homolog from Pseudomonas putida (strain GB-1).